Here is a 143-residue protein sequence, read N- to C-terminus: Glycine cleavage system H protein 1 (143 aa).

Residues 26-107 (IYSVGMASIL…PYSSWIAKLK (82 aa)) form the Lipoyl-binding domain. K67 is subject to N6-lipoyllysine.

Belongs to the GcvH family. In terms of assembly, the glycine cleavage system is composed of four proteins: P, T, L and H. Requires (R)-lipoate as cofactor.

Functionally, the glycine cleavage system catalyzes the degradation of glycine. The H protein shuttles the methylamine group of glycine from the P protein to the T protein. The chain is Glycine cleavage system H protein 1 from Aquifex aeolicus (strain VF5).